We begin with the raw amino-acid sequence, 269 residues long: tRNA pseudouridine synthase A (269 aa).

Residue aspartate 51 is the Nucleophile of the active site. Tyrosine 109 contributes to the substrate binding site.

Belongs to the tRNA pseudouridine synthase TruA family. Homodimer.

The catalysed reaction is uridine(38/39/40) in tRNA = pseudouridine(38/39/40) in tRNA. Formation of pseudouridine at positions 38, 39 and 40 in the anticodon stem and loop of transfer RNAs. The polypeptide is tRNA pseudouridine synthase A (Histophilus somni (strain 129Pt) (Haemophilus somnus)).